We begin with the raw amino-acid sequence, 333 residues long: Cytochrome f (333 aa).

Residues 1–44 (MRNASVTARLTRSVRAIVKTLLIAIATVTFYFSCDLALPQSAAA) form the signal peptide. Tyr45, Cys66, Cys69, and His70 together coordinate heme. The chain crosses the membrane as a helical span at residues 301–318 (GLIAFVALVMLAQVMLVL).

The protein belongs to the cytochrome f family. In terms of assembly, the 4 large subunits of the cytochrome b6-f complex are cytochrome b6, subunit IV (17 kDa polypeptide, PetD), cytochrome f and the Rieske protein, while the 4 small subunits are PetG, PetL, PetM and PetN. The complex functions as a dimer. Requires heme as cofactor.

It is found in the cellular thylakoid membrane. Component of the cytochrome b6-f complex, which mediates electron transfer between photosystem II (PSII) and photosystem I (PSI), cyclic electron flow around PSI, and state transitions. This is Cytochrome f (petA) from Desmonostoc sp. (strain PCC 7906) (Nostoc sp. (strain PCC 7906)).